The sequence spans 674 residues: YAP1-binding protein 1 (674 aa).

This sequence belongs to the YBP1 family. As to quaternary structure, interacts with YAP1. Forms a peroxide stress induced complex with YAP1 in the cytoplasm. Systematic proteome-wide 2-hybrid interaction studies suggest that YAP1, HYR1/GPX3, and YBP1 all interact with the nuclear pore complex subunit NUP116, which is involved in nucleocytoplasmic transport.

Its subcellular location is the cytoplasm. Its function is as follows. Involved in oxidative stress response and redox homeostasis. Required for hydrogen peroxide-induced oxidation and nuclear localization (activation) of YAP1. Functions probably in concert with HYP1/GPX3, the actual YAP1 modifying enzyme. YBP1 is not required for HYP1/GPX3-independent, diamide-induced oxidation of YAP1. The polypeptide is YAP1-binding protein 1 (Saccharomyces cerevisiae (strain ATCC 204508 / S288c) (Baker's yeast)).